Here is a 289-residue protein sequence, read N- to C-terminus: Rhodopsin (289 aa).

The Extracellular portion of the chain corresponds to 1-7 (YLVNPAA). A helical transmembrane segment spans residues 8-32 (YAAPGAYMFLLILVGFPVNFLTLYV). Over 33 to 44 (TLEHKKLRTPLN) the chain is Cytoplasmic. A helical transmembrane segment spans residues 45 to 67 (YILLNLAVADLFMVLGGFTTTMY). The Extracellular portion of the chain corresponds to 68 to 81 (TSMHGYFVLGRLGC). Cysteine 81 and cysteine 158 are joined by a disulfide. A helical membrane pass occupies residues 82-104 (NLEGFFATLGGEIALWSLVVLAI). The 'Ionic lock' involved in activated form stabilization signature appears at 105–107 (ERW). The Cytoplasmic portion of the chain corresponds to 105-123 (ERWIVVCKPISNFRFTEDH). Residues 124 to 144 (AIMGLAFSWVMALTCAVPPLV) traverse the membrane as a helical segment. Over 145 to 173 (GWSRYIPEGMQCSCGVDYYTRAEGFNNES) the chain is Extracellular. A glycan (N-linked (GlcNAc...) asparagine) is linked at asparagine 171. Residues 174–195 (FVIYMFIVHFLIPLSNNFFCYG) traverse the membrane as a helical segment. The Cytoplasmic segment spans residues 196-223 (RLLCAVKEAAAAQQESETTQRAEREVSR). A helical transmembrane segment spans residues 224-245 (MVVMMVVSFLMCWLPYASVAWY). Over 246 to 257 (IFCNQGSEFGPI) the chain is Extracellular. Residues 258–279 (FMTLPAFFAKSSAIYNPLIYIC) form a helical membrane-spanning segment. Residue lysine 267 is modified to N6-(retinylidene)lysine. Residues 280–289 (MNKHVRHCMI) are Cytoplasmic-facing.

This sequence belongs to the G-protein coupled receptor 1 family. Opsin subfamily. In terms of processing, phosphorylated on some or all of the serine and threonine residues present in the C-terminal region. Contains one covalently linked retinal chromophore.

The protein localises to the membrane. It localises to the cell projection. Its subcellular location is the cilium. The protein resides in the photoreceptor outer segment. In terms of biological role, photoreceptor required for image-forming vision at low light intensity. While most salt water fish species use retinal as chromophore, most freshwater fish use 3-dehydroretinal, or a mixture of retinal and 3-dehydroretinal. Light-induced isomerization of 11-cis to all-trans retinal triggers a conformational change that activates signaling via G-proteins. Subsequent receptor phosphorylation mediates displacement of the bound G-protein alpha subunit by arrestin and terminates signaling. This is Rhodopsin (rho) from Cottocomephorus grewingkii (Baikal yellowfin).